The sequence spans 570 residues: 15-cis-phytoene desaturase, chloroplastic/chromoplastic (570 aa).

The N-terminal 91 residues, 1–91, are a transit peptide targeting the chloroplast and chromoplast; the sequence is MSIVGLVSVV…AQLSASFRSS (91 aa). FAD is bound by residues 104-120, A108, 127-128, K135, 152-153, and Y158; these read GAGL…ADAG, ES, and HI. R293 provides a ligand contact to substrate. D524 serves as a coordination point for FAD. Residue A532 coordinates substrate. Residue M534 participates in FAD binding.

The protein belongs to the carotenoid/retinoid oxidoreductase family. Homotetramer. The cofactor is FAD. Expressed more strongly in flowers than in leaves.

It is found in the plastid. Its subcellular location is the chloroplast. It localises to the chromoplast. The protein localises to the membrane. The enzyme catalyses 2 a plastoquinone + 15-cis-phytoene = 9,9',15-tri-cis-zeta-carotene + 2 a plastoquinol. It functions in the pathway carotenoid biosynthesis; lycopene biosynthesis. In terms of biological role, converts phytoene into zeta-carotene via the intermediary of phytofluene by the symmetrical introduction of two double bonds at the C-11 and C-11' positions of phytoene with a concomitant isomerization of two neighboring double bonds at the C9 and C9' positions from trans to cis. This chain is 15-cis-phytoene desaturase, chloroplastic/chromoplastic (PDS1), found in Narcissus pseudonarcissus (Daffodil).